The sequence spans 434 residues: ATP-dependent protease ATPase subunit HslU (434 aa).

Residues valine 18, 60 to 65, aspartate 247, glutamate 312, and arginine 384 contribute to the ATP site; that span reads GVGKTE.

This sequence belongs to the ClpX chaperone family. HslU subfamily. A double ring-shaped homohexamer of HslV is capped on each side by a ring-shaped HslU homohexamer. The assembly of the HslU/HslV complex is dependent on binding of ATP.

Its subcellular location is the cytoplasm. In terms of biological role, ATPase subunit of a proteasome-like degradation complex; this subunit has chaperone activity. The binding of ATP and its subsequent hydrolysis by HslU are essential for unfolding of protein substrates subsequently hydrolyzed by HslV. HslU recognizes the N-terminal part of its protein substrates and unfolds these before they are guided to HslV for hydrolysis. This is ATP-dependent protease ATPase subunit HslU from Bradyrhizobium sp. (strain BTAi1 / ATCC BAA-1182).